Consider the following 240-residue polypeptide: Phosphoenolpyruvate guanylyltransferase (240 aa).

Thr-161, Gly-178, and Ser-181 together coordinate phosphoenolpyruvate.

This sequence belongs to the CofC family.

It carries out the reaction phosphoenolpyruvate + GTP + H(+) = enolpyruvoyl-2-diphospho-5'-guanosine + diphosphate. It functions in the pathway cofactor biosynthesis; coenzyme F420 biosynthesis. Guanylyltransferase that catalyzes the activation of phosphoenolpyruvate (PEP) as enolpyruvoyl-2-diphospho-5'-guanosine, via the condensation of PEP with GTP. It is involved in the biosynthesis of coenzyme F420, a hydride carrier cofactor. The chain is Phosphoenolpyruvate guanylyltransferase from Rhodococcus opacus (strain B4).